Consider the following 234-residue polypeptide: tRNA (guanine-N(1)-)-methyltransferase (234 aa).

S-adenosyl-L-methionine contacts are provided by residues glycine 115 and 135 to 140 (VGDYIL).

The protein belongs to the RNA methyltransferase TrmD family. As to quaternary structure, homodimer.

Its subcellular location is the cytoplasm. It catalyses the reaction guanosine(37) in tRNA + S-adenosyl-L-methionine = N(1)-methylguanosine(37) in tRNA + S-adenosyl-L-homocysteine + H(+). Its function is as follows. Specifically methylates guanosine-37 in various tRNAs. The polypeptide is tRNA (guanine-N(1)-)-methyltransferase (Rickettsia africae (strain ESF-5)).